The sequence spans 45 residues: MLPTYRPNKRRRAKSIGFRARMETPGGKKVLSARRAKGRKNLIAK.

Positions 23–45 are disordered; it reads ETPGGKKVLSARRAKGRKNLIAK. Residues 31–45 show a composition bias toward basic residues; that stretch reads LSARRAKGRKNLIAK.

Belongs to the bacterial ribosomal protein bL34 family.

The protein is Large ribosomal subunit protein bL34 of Elusimicrobium minutum (strain Pei191).